The following is a 338-amino-acid chain: UbiA prenyltransferase domain-containing protein 1 (338 aa).

Ala-2 carries the post-translational modification N-acetylalanine. Helical transmembrane passes span 83 to 103 (LLVG…LVNT), 134 to 154 (FGVF…YLSP), 160 to 180 (LALI…GIGF), 188 to 208 (LIIL…IQVG), 209 to 229 (SLAI…EAIL), 245 to 267 (IVTL…LLFL), 277 to 297 (THCT…FSLE), and 315 to 335 (LNLL…AGSL).

This sequence belongs to the UbiA prenyltransferase family. In terms of assembly, interacts with HMGCR and SOAT1. Ubiquitously expressed.

The protein localises to the endoplasmic reticulum membrane. The protein resides in the golgi apparatus membrane. Its subcellular location is the mitochondrion membrane. It localises to the cytoplasm. It is found in the nucleus. It catalyses the reaction menadiol + (2E,6E,10E)-geranylgeranyl diphosphate = menaquinol-4 + diphosphate. It carries out the reaction all-trans-decaprenyl diphosphate + 4-hydroxybenzoate = 4-hydroxy-3-(all-trans-decaprenyl)benzoate + diphosphate. It participates in quinol/quinone metabolism; menaquinone biosynthesis. It functions in the pathway cofactor biosynthesis; ubiquinone biosynthesis. Its function is as follows. Prenyltransferase that mediates the formation of menaquinone-4 (MK-4) and coenzyme Q10. MK-4 is a vitamin K2 isoform present at high concentrations in the brain, kidney and pancreas, and is required for endothelial cell development. Mediates the conversion of phylloquinone (PK) into MK-4, probably by cleaving the side chain of phylloquinone (PK) to release 2-methyl-1,4-naphthoquinone (menadione; K3) and then prenylating it with geranylgeranyl pyrophosphate (GGPP) to form MK-4. Also plays a role in cardiovascular development independently of MK-4 biosynthesis, by acting as a coenzyme Q10 biosynthetic enzyme: coenzyme Q10, also named ubiquinone, plays an important antioxidant role in the cardiovascular system. Mediates biosynthesis of coenzyme Q10 in the Golgi membrane, leading to protect cardiovascular tissues from NOS3/eNOS-dependent oxidative stress. The protein is UbiA prenyltransferase domain-containing protein 1 of Homo sapiens (Human).